Reading from the N-terminus, the 344-residue chain is Glyceraldehyde-3-phosphate dehydrogenase (344 aa).

NAD(+) contacts are provided by residues 11-12 (TI) and glycine 110. D-glyceraldehyde 3-phosphate is bound at residue 139-141 (SCN). The active-site Nucleophile is the cysteine 140. Arginine 169 serves as a coordination point for NAD(+). 195 to 196 (HG) contacts D-glyceraldehyde 3-phosphate. Glutamine 302 is a binding site for NAD(+).

Belongs to the glyceraldehyde-3-phosphate dehydrogenase family. As to quaternary structure, homotetramer.

Its subcellular location is the cytoplasm. It carries out the reaction D-glyceraldehyde 3-phosphate + phosphate + NADP(+) = (2R)-3-phospho-glyceroyl phosphate + NADPH + H(+). The catalysed reaction is D-glyceraldehyde 3-phosphate + phosphate + NAD(+) = (2R)-3-phospho-glyceroyl phosphate + NADH + H(+). It functions in the pathway carbohydrate degradation; glycolysis; pyruvate from D-glyceraldehyde 3-phosphate: step 1/5. This is Glyceraldehyde-3-phosphate dehydrogenase from Pyrobaculum islandicum (strain DSM 4184 / JCM 9189 / GEO3).